The following is a 186-amino-acid chain: Putative 5'(3')-deoxyribonucleotidase (186 aa).

Asp6 serves as the catalytic Nucleophile. Asp6, Asp8, and Asp137 together coordinate Mg(2+). Asp8 acts as the Proton donor in catalysis.

It belongs to the 5'(3')-deoxyribonucleotidase family. The cofactor is Mg(2+).

Its function is as follows. Dephosphorylates the 5' and 2'(3')-phosphates of deoxyribonucleotides. This Bordetella bronchiseptica (strain ATCC BAA-588 / NCTC 13252 / RB50) (Alcaligenes bronchisepticus) protein is Putative 5'(3')-deoxyribonucleotidase.